Reading from the N-terminus, the 219-residue chain is MIGWLRGERIEHWSQGGRQGLVIACAGVGYEVQLASRYLQPLSAGATCTVWIHQVQRDDGSSLFGFPDRRERDLFRVLISVNGIGPQVGLALLESCSAAELIEAIIDGDLRRLTQAQGVGKRTAERLAVELRDRLGAWSAEKNSDHSDLSLVDRSDLKSLPIEPDPLQDLQLTLSTLGYEDLEIRRAMRAVATGEEVPAANDGDGWLRASLRWLNRPSA.

Residues 1 to 67 (MIGWLRGERI…DDGSSLFGFP (67 aa)) are domain I. Residues 68-146 (DRRERDLFRV…AWSAEKNSDH (79 aa)) form a domain II region. The interval 147 to 161 (SDLSLVDRSDLKSLP) is flexible linker. The interval 162–219 (IEPDPLQDLQLTLSTLGYEDLEIRRAMRAVATGEEVPAANDGDGWLRASLRWLNRPSA) is domain III.

This sequence belongs to the RuvA family. Homotetramer. Forms an RuvA(8)-RuvB(12)-Holliday junction (HJ) complex. HJ DNA is sandwiched between 2 RuvA tetramers; dsDNA enters through RuvA and exits via RuvB. An RuvB hexamer assembles on each DNA strand where it exits the tetramer. Each RuvB hexamer is contacted by two RuvA subunits (via domain III) on 2 adjacent RuvB subunits; this complex drives branch migration. In the full resolvosome a probable DNA-RuvA(4)-RuvB(12)-RuvC(2) complex forms which resolves the HJ.

It localises to the cytoplasm. Functionally, the RuvA-RuvB-RuvC complex processes Holliday junction (HJ) DNA during genetic recombination and DNA repair, while the RuvA-RuvB complex plays an important role in the rescue of blocked DNA replication forks via replication fork reversal (RFR). RuvA specifically binds to HJ cruciform DNA, conferring on it an open structure. The RuvB hexamer acts as an ATP-dependent pump, pulling dsDNA into and through the RuvAB complex. HJ branch migration allows RuvC to scan DNA until it finds its consensus sequence, where it cleaves and resolves the cruciform DNA. The polypeptide is Holliday junction branch migration complex subunit RuvA (Synechococcus sp. (strain CC9311)).